The primary structure comprises 296 residues: GTPase Era (296 aa).

Residues Lys7–Ser174 form the Era-type G domain. The segment at Gly15–Ser22 is G1. Residue Gly15–Ser22 coordinates GTP. The tract at residues Gln41–Val45 is G2. The tract at residues Asp62–Gly65 is G3. Residues Asp62–Ile66 and Asn124–Asp127 each bind GTP. Residues Asn124–Asp127 form a G4 region. The interval Ile153–Ala155 is G5. A KH type-2 domain is found at Leu205–Glu282.

Belongs to the TRAFAC class TrmE-Era-EngA-EngB-Septin-like GTPase superfamily. Era GTPase family. Monomer.

It localises to the cytoplasm. The protein localises to the cell inner membrane. In terms of biological role, an essential GTPase that binds both GDP and GTP, with rapid nucleotide exchange. Plays a role in 16S rRNA processing and 30S ribosomal subunit biogenesis and possibly also in cell cycle regulation and energy metabolism. The chain is GTPase Era from Ehrlichia canis (strain Jake).